Here is a 332-residue protein sequence, read N- to C-terminus: Ribosomal RNA small subunit methyltransferase H (332 aa).

S-adenosyl-L-methionine contacts are provided by residues 34-36 (GGH), Asp59, Phe86, Asp112, and Gln119.

It belongs to the methyltransferase superfamily. RsmH family.

The protein localises to the cytoplasm. It catalyses the reaction cytidine(1402) in 16S rRNA + S-adenosyl-L-methionine = N(4)-methylcytidine(1402) in 16S rRNA + S-adenosyl-L-homocysteine + H(+). Functionally, specifically methylates the N4 position of cytidine in position 1402 (C1402) of 16S rRNA. The chain is Ribosomal RNA small subunit methyltransferase H from Chlorobium phaeobacteroides (strain BS1).